The primary structure comprises 301 residues: Ornithine carbamoyltransferase (301 aa).

Carbamoyl phosphate-binding positions include Arg-100 and His-127–Gln-130. L-ornithine-binding positions include Asn-158, Asp-221, and Ser-225–Met-226. 2 residues coordinate carbamoyl phosphate: Cys-260 and Arg-288.

The protein belongs to the aspartate/ornithine carbamoyltransferase superfamily. OTCase family. As to quaternary structure, the enzyme is present as a mixture of trimers and dodecamers, with the relative proportions of the two forms depending on the salt concentration. In addition, the trimeric fraction could reassociate into dodecamers when the salt concentration is increased. It appears that in vivo, the main fraction is in the dodecameric form.

Its subcellular location is the cytoplasm. It carries out the reaction carbamoyl phosphate + L-ornithine = L-citrulline + phosphate + H(+). The protein operates within amino-acid biosynthesis; L-arginine biosynthesis; L-arginine from L-ornithine and carbamoyl phosphate: step 1/3. With respect to regulation, inhibited by excess of arginine and by the bisubstrate delta-N-phosphonoacetyl-L-ornithine (PALO). Functionally, reversibly catalyzes the transfer of the carbamoyl group from carbamoyl phosphate (CP) to the N(epsilon) atom of ornithine (ORN) to produce L-citrulline, which is a substrate for argininosuccinate synthetase, the enzyme involved in the final step in arginine biosynthesis. The polypeptide is Ornithine carbamoyltransferase (Moritella abyssi).